The primary structure comprises 251 residues: Triosephosphate isomerase (251 aa).

9–11 provides a ligand contact to substrate; the sequence is NWK. Histidine 95 acts as the Electrophile in catalysis. Glutamate 167 functions as the Proton acceptor in the catalytic mechanism. Residues glycine 173, serine 212, and 233–234 each bind substrate; that span reads GG.

Belongs to the triosephosphate isomerase family. In terms of assembly, homodimer.

It localises to the cytoplasm. It carries out the reaction D-glyceraldehyde 3-phosphate = dihydroxyacetone phosphate. The protein operates within carbohydrate biosynthesis; gluconeogenesis. Its pathway is carbohydrate degradation; glycolysis; D-glyceraldehyde 3-phosphate from glycerone phosphate: step 1/1. In terms of biological role, involved in the gluconeogenesis. Catalyzes stereospecifically the conversion of dihydroxyacetone phosphate (DHAP) to D-glyceraldehyde-3-phosphate (G3P). This is Triosephosphate isomerase from Pseudomonas entomophila (strain L48).